A 415-amino-acid polypeptide reads, in one-letter code: FXa-directed anticoagulant (415 aa).

The first 17 residues, 1-17, serve as a signal peptide directing secretion; the sequence is MYLKIVILVTFPLVCFT. 4 N-linked (GlcNAc...) asparagine glycosylation sites follow: Asn117, Asn166, Asn216, and Asn320.

Belongs to the serpin family. In terms of assembly, (Microbial infection) Interacts with Zika virus envelope protein E and Zika virus-like particles; the interaction does not affect Zika virus replication in human endothelial cells and keratinocytes. Post-translationally, the N-terminus is blocked. Female salivary gland (at protein level). Not detected in female carcass without head and salivary glands. Not detected in male tissues.

It localises to the secreted. Its function is as follows. Anticoagulant serpin-type protein inhibiting host coagulation factor Xa (F10). Does not inhibit host thrombin (F2) and trypsin. Functionally, (Microbial infection) Does not affect Zika virus replication in human endothelial cells and keratinocytes. In Aedes aegypti (Yellowfever mosquito), this protein is FXa-directed anticoagulant.